A 627-amino-acid polypeptide reads, in one-letter code: Monoterpene synthase like 1, chloroplastic (627 aa).

Residues 1–50 constitute a chloroplast transit peptide; sequence MDLISVLPSTSKSCVCMHKPLSSSTHKLKPFCRTIRILGMPRPRKSVLMA. Mg(2+) contacts are provided by D378, D382, and D530. Residues 378-382 carry the DDXXD motif motif; it reads DDMYD.

It belongs to the terpene synthase family. Tpsd subfamily. Requires Mg(2+) as cofactor. It depends on Mn(2+) as a cofactor.

The protein localises to the plastid. It localises to the chloroplast. The protein operates within terpene metabolism; oleoresin biosynthesis. It functions in the pathway secondary metabolite biosynthesis; terpenoid biosynthesis. In terms of biological role, monoterpene synthase (TPS) involved in the biosynthesis of monoterpene natural products included in conifer oleoresin secretions and volatile emissions; these compounds contribute to biotic and abiotic stress defense against herbivores and pathogens. This Pinus contorta (Shore pine) protein is Monoterpene synthase like 1, chloroplastic.